The primary structure comprises 563 residues: Proline--tRNA ligase (563 aa).

Belongs to the class-II aminoacyl-tRNA synthetase family. ProS type 1 subfamily. Homodimer.

The protein resides in the cytoplasm. The catalysed reaction is tRNA(Pro) + L-proline + ATP = L-prolyl-tRNA(Pro) + AMP + diphosphate. Catalyzes the attachment of proline to tRNA(Pro) in a two-step reaction: proline is first activated by ATP to form Pro-AMP and then transferred to the acceptor end of tRNA(Pro). As ProRS can inadvertently accommodate and process non-cognate amino acids such as alanine and cysteine, to avoid such errors it has two additional distinct editing activities against alanine. One activity is designated as 'pretransfer' editing and involves the tRNA(Pro)-independent hydrolysis of activated Ala-AMP. The other activity is designated 'posttransfer' editing and involves deacylation of mischarged Ala-tRNA(Pro). The misacylated Cys-tRNA(Pro) is not edited by ProRS. The sequence is that of Proline--tRNA ligase from Persephonella marina (strain DSM 14350 / EX-H1).